A 192-amino-acid polypeptide reads, in one-letter code: Pyridoxal 5'-phosphate synthase subunit PdxT (192 aa).

Residue 46-48 participates in L-glutamine binding; sequence GES. The active-site Nucleophile is the C77. L-glutamine is bound by residues R103 and 131 to 132; that span reads IR. Residues H167 and E169 each act as charge relay system in the active site.

This sequence belongs to the glutaminase PdxT/SNO family. In the presence of PdxS, forms a dodecamer of heterodimers. Only shows activity in the heterodimer.

The enzyme catalyses aldehydo-D-ribose 5-phosphate + D-glyceraldehyde 3-phosphate + L-glutamine = pyridoxal 5'-phosphate + L-glutamate + phosphate + 3 H2O + H(+). It catalyses the reaction L-glutamine + H2O = L-glutamate + NH4(+). Its pathway is cofactor biosynthesis; pyridoxal 5'-phosphate biosynthesis. Catalyzes the hydrolysis of glutamine to glutamate and ammonia as part of the biosynthesis of pyridoxal 5'-phosphate. The resulting ammonia molecule is channeled to the active site of PdxS. This is Pyridoxal 5'-phosphate synthase subunit PdxT from Exiguobacterium sibiricum (strain DSM 17290 / CCUG 55495 / CIP 109462 / JCM 13490 / 255-15).